A 215-amino-acid polypeptide reads, in one-letter code: Probable phosphoglycerate mutase GpmB (215 aa).

Substrate contacts are provided by residues Arg8–Asn15, Gln21–Gly22, Arg58, Arg60, Glu82–Met85, Arg104–Arg105, and Gly151–Ile152. His9 functions as the Tele-phosphohistidine intermediate in the catalytic mechanism. Glu82 acts as the Proton donor/acceptor in catalysis.

The protein belongs to the phosphoglycerate mutase family. GpmB subfamily.

The enzyme catalyses (2R)-2-phosphoglycerate = (2R)-3-phosphoglycerate. It participates in carbohydrate degradation; glycolysis; pyruvate from D-glyceraldehyde 3-phosphate: step 3/5. This chain is Probable phosphoglycerate mutase GpmB, found in Escherichia coli O9:H4 (strain HS).